The sequence spans 514 residues: Butyrophilin subfamily 2 member A2 (514 aa).

Residues 1–29 (MEPTTSLRSCPIASLLFFLVLSLFVLVSA) form the signal peptide. The region spanning 30 to 142 (QFTVIGPAEP…SYDQATMKLM (113 aa)) is the Ig-like V-type domain. Over 30–244 (QFTVIGPAEP…ILIPESFVPS (215 aa)) the chain is Extracellular. Residues N47 and N115 are each glycosylated (N-linked (GlcNAc...) asparagine). Cystine bridges form between C52–C126 and C166–C220. Residues 150–232 (PLIKMKTLED…NNTLLSQEVE (83 aa)) enclose the Ig-like C2-type domain. The helical transmembrane segment at 245–265 (LPLWMVAVAVTLPVVMLILLT) threads the bilayer. The Cytoplasmic segment spans residues 266–514 (SGSICLVKKH…PISQSLVRKP (249 aa)). Positions 281 to 304 (ILSAEKEAEYEEKEAARQLQEELR) form a coiled coil. The 194-residue stretch at 295-488 (AARQLQEELR…LFICPAFTGA (194 aa)) folds into the B30.2/SPRY domain.

Belongs to the immunoglobulin superfamily. BTN/MOG family. Post-translationally, N-glycosylated. In terms of tissue distribution, widely expressed (at protein level). In the thymus, restricted to the corticomedullary junction, but not confined solely to epithelial cells (at protein level). Significant expression on naive B-cells, splenic natural killer cells, dendritic cells and peritoneal macrophages (at protein level). Negligible expression on naive T-cells up-regulated on activated T-cells (at protein level).

It localises to the membrane. Functionally, inhibits the proliferation of CD4 and CD8 T-cells activated by anti-CD3 antibodies, T-cell metabolism and IL2 and IFNG secretion. In Mus musculus (Mouse), this protein is Butyrophilin subfamily 2 member A2 (Btn2a2).